The following is a 205-amino-acid chain: RNA pyrophosphohydrolase (205 aa).

The Nudix hydrolase domain maps to 6-149 (GFRPNVGIVL…KRGVYARALR (144 aa)). A Nudix box motif is present at residues 38–59 (GGMNTDETPVEAMYRELREETG). A disordered region spans residues 178 to 205 (GSSAAGHDRPRKRPRKRGGVLPVRINND). Over residues 186–195 (RPRKRPRKRG) the composition is skewed to basic residues.

This sequence belongs to the Nudix hydrolase family. RppH subfamily. Requires a divalent metal cation as cofactor.

Functionally, accelerates the degradation of transcripts by removing pyrophosphate from the 5'-end of triphosphorylated RNA, leading to a more labile monophosphorylated state that can stimulate subsequent ribonuclease cleavage. The chain is RNA pyrophosphohydrolase from Xanthomonas campestris pv. campestris (strain 8004).